We begin with the raw amino-acid sequence, 221 residues long: Endonuclease V (221 aa).

Positions 38 and 104 each coordinate Mg(2+).

Belongs to the endonuclease V family. The cofactor is Mg(2+).

The protein resides in the cytoplasm. It catalyses the reaction Endonucleolytic cleavage at apurinic or apyrimidinic sites to products with a 5'-phosphate.. DNA repair enzyme involved in the repair of deaminated bases. Selectively cleaves double-stranded DNA at the second phosphodiester bond 3' to a deoxyinosine leaving behind the intact lesion on the nicked DNA. Recognizes only deoxyinosine. The chain is Endonuclease V from Archaeoglobus fulgidus (strain ATCC 49558 / DSM 4304 / JCM 9628 / NBRC 100126 / VC-16).